A 264-amino-acid polypeptide reads, in one-letter code: Phosphonoacetaldehyde hydrolase (264 aa).

Aspartate 9 serves as the catalytic Nucleophile. Residues aspartate 9 and alanine 11 each coordinate Mg(2+). Lysine 50 (schiff-base intermediate with substrate) is an active-site residue. Residue aspartate 183 participates in Mg(2+) binding.

The protein belongs to the HAD-like hydrolase superfamily. PhnX family. As to quaternary structure, homodimer. The cofactor is Mg(2+).

The enzyme catalyses phosphonoacetaldehyde + H2O = acetaldehyde + phosphate + H(+). In terms of biological role, involved in phosphonate degradation. The protein is Phosphonoacetaldehyde hydrolase of Bacillus anthracis.